Here is a 155-residue protein sequence, read N- to C-terminus: DNA gyrase inhibitor (155 aa).

Belongs to the DNA gyrase inhibitor family. As to quaternary structure, interacts with DNA gyrase.

It is found in the cytoplasm. In terms of biological role, inhibits the supercoiling activity of DNA gyrase. Acts by inhibiting DNA gyrase at an early step, prior to (or at the step of) binding of DNA by the gyrase. It protects cells against toxins that target DNA gyrase, by inhibiting activity of these toxins and reducing the formation of lethal double-strand breaks in the cell. This chain is DNA gyrase inhibitor, found in Edwardsiella piscicida.